A 68-amino-acid chain; its full sequence is DNA-directed RNA polymerase subunit omega (68 aa).

This sequence belongs to the RNA polymerase subunit omega family. The RNAP catalytic core consists of 2 alpha, 1 beta, 1 beta' and 1 omega subunit. When a sigma factor is associated with the core the holoenzyme is formed, which can initiate transcription.

It carries out the reaction RNA(n) + a ribonucleoside 5'-triphosphate = RNA(n+1) + diphosphate. In terms of biological role, promotes RNA polymerase assembly. Latches the N- and C-terminal regions of the beta' subunit thereby facilitating its interaction with the beta and alpha subunits. The chain is DNA-directed RNA polymerase subunit omega from Desulforapulum autotrophicum (strain ATCC 43914 / DSM 3382 / VKM B-1955 / HRM2) (Desulfobacterium autotrophicum).